The primary structure comprises 98 residues: Protein Asterix (98 aa).

2 consecutive transmembrane segments (helical) span residues leucine 32–valine 52 and valine 78–valine 98.

This sequence belongs to the Asterix family.

The protein resides in the membrane. The protein is Protein Asterix of Dictyostelium discoideum (Social amoeba).